A 202-amino-acid polypeptide reads, in one-letter code: ATP-dependent Clp protease proteolytic subunit (202 aa).

Serine 106 functions as the Nucleophile in the catalytic mechanism. The active site involves histidine 131.

Belongs to the peptidase S14 family. As to quaternary structure, fourteen ClpP subunits assemble into 2 heptameric rings which stack back to back to give a disk-like structure with a central cavity, resembling the structure of eukaryotic proteasomes.

It is found in the cytoplasm. The enzyme catalyses Hydrolysis of proteins to small peptides in the presence of ATP and magnesium. alpha-casein is the usual test substrate. In the absence of ATP, only oligopeptides shorter than five residues are hydrolyzed (such as succinyl-Leu-Tyr-|-NHMec, and Leu-Tyr-Leu-|-Tyr-Trp, in which cleavage of the -Tyr-|-Leu- and -Tyr-|-Trp bonds also occurs).. In terms of biological role, cleaves peptides in various proteins in a process that requires ATP hydrolysis. Has a chymotrypsin-like activity. Plays a major role in the degradation of misfolded proteins. This is ATP-dependent Clp protease proteolytic subunit from Shewanella sp. (strain MR-7).